The following is a 400-amino-acid chain: Phosphoglycerate kinase (400 aa).

Residues 24–26, Arg-40, 63–66, Arg-121, and Arg-154 each bind substrate; these read DFN and HFGR. Residues Lys-205, Gly-296, Glu-327, and 356 to 359 each bind ATP; that span reads GGDS.

Monomer.

The protein resides in the cytoplasm. The enzyme catalyses (2R)-3-phosphoglycerate + ATP = (2R)-3-phospho-glyceroyl phosphate + ADP. Its pathway is carbohydrate degradation; glycolysis; pyruvate from D-glyceraldehyde 3-phosphate: step 2/5. The polypeptide is Phosphoglycerate kinase (Nostoc sp. (strain PCC 7120 / SAG 25.82 / UTEX 2576)).